Reading from the N-terminus, the 356-residue chain is sn-glycerol-3-phosphate import ATP-binding protein UgpC (356 aa).

Residues 4 to 235 (LKLQAVTKSW…PASLFVASFI (232 aa)) enclose the ABC transporter domain. An ATP-binding site is contributed by 37–44 (GPSGCGKS).

Belongs to the ABC transporter superfamily. sn-glycerol-3-phosphate importer (TC 3.A.1.1.3) family. As to quaternary structure, the complex is composed of two ATP-binding proteins (UgpC), two transmembrane proteins (UgpA and UgpE) and a solute-binding protein (UgpB).

It is found in the cell inner membrane. The enzyme catalyses sn-glycerol 3-phosphate(out) + ATP + H2O = sn-glycerol 3-phosphate(in) + ADP + phosphate + H(+). Its function is as follows. Part of the ABC transporter complex UgpBAEC involved in sn-glycerol-3-phosphate (G3P) import. Responsible for energy coupling to the transport system. This is sn-glycerol-3-phosphate import ATP-binding protein UgpC from Escherichia coli O6:K15:H31 (strain 536 / UPEC).